A 271-amino-acid chain; its full sequence is Aquaporin-11 (271 aa).

The Cytoplasmic segment spans residues 1–14; the sequence is MSALLGLPPEVQDT. The chain crosses the membrane as a helical span at residues 15-35; that stretch reads CISLGLMLLVVLFMGLARVIA. The Lumenal portion of the chain corresponds to 36–41; the sequence is RQQLHR. Residues 42-62 form a helical membrane-spanning segment; it reads PMVHAFVLEFLATFQLCYCTH. At 63–76 the chain is on the cytoplasmic side; it reads ELQLLSEQDSGHPT. A helical transmembrane segment spans residues 77–97; the sequence is WTLTLIYFFSLVHGLTLVGTA. At 98–166 the chain is on the lumenal side; the sequence is SNPCGVMMQM…NPINTDISKA (69 aa). The NPC signature appears at 99 to 101; it reads NPC. The chain crosses the membrane as a helical span at residues 167 to 187; it reads IIIEAICSFIFHSALLHFQEV. At 188-194 the chain is on the cytoplasmic side; sequence RTKLRIH. A helical membrane pass occupies residues 195-215; the sequence is VLAALITFLAYAGGSLTGALF. The short motif at 216–218 is the NPA element; that stretch reads NPA. Residues 216 to 234 lie on the Lumenal side of the membrane; sequence NPALALSLHFPCFDESFYK. A helical membrane pass occupies residues 235–255; the sequence is FFVVYWVAPSLGVLLMILMFS. The Cytoplasmic segment spans residues 256-271; that stretch reads FFLPWLHNNQLSNKKE.

This sequence belongs to the MIP/aquaporin (TC 1.A.8) family. AQP11/AQP12 subfamily. In terms of assembly, homodimer; disulfide-linked. Homotetramer. Can also form homomultimer. Post-translationally, not glycosylated. In terms of tissue distribution, expressed in retina specifically at retinal Mueller glial cells. Expressed in adult testis, in the elongated spermatids (ES) and in residual bodies inside Sertoli cells.

The protein localises to the endoplasmic reticulum membrane. It is found in the cytoplasmic vesicle membrane. Its subcellular location is the cell membrane. The catalysed reaction is H2O(in) = H2O(out). It carries out the reaction glycerol(in) = glycerol(out). The enzyme catalyses H2O2(out) = H2O2(in). Functionally, channel protein that facilitates the transport of water, glycerol and hydrogen peroxide across membrane of cell or organelles guaranteeing intracellular homeostasis in several organes like liver, kidney and brain. In situation of stress, participates in endoplasmic reticulum (ER) homeostasis by regulating redox homeostasis through the transport of hydrogen peroxide across the endoplasmic reticulum membrane thereby regulating the oxidative stress through the NADPH oxidase 2 pathway. Plays a role by maintaining an environment suitable for translation or protein foldings in the ER lumen namely by participating in the PKD1 glycosylation processing resulting in regulation of PKD1 membrane trafficking thereby preventing the accumulation of unfolding protein in ER. Plays a role in the proximal tubule function by regulating its endosomal acidification. May play a role in postnatal kidney development. This is Aquaporin-11 from Rattus norvegicus (Rat).